The chain runs to 352 residues: Threonine synthase (352 aa).

At Lys-59 the chain carries N6-(pyridoxal phosphate)lysine. Pyridoxal 5'-phosphate is bound by residues Asn-85, Gly-185–Asn-189, and Thr-314.

This sequence belongs to the threonine synthase family. Requires pyridoxal 5'-phosphate as cofactor.

It catalyses the reaction O-phospho-L-homoserine + H2O = L-threonine + phosphate. It functions in the pathway amino-acid biosynthesis; L-threonine biosynthesis; L-threonine from L-aspartate: step 5/5. In terms of biological role, catalyzes the gamma-elimination of phosphate from L-phosphohomoserine and the beta-addition of water to produce L-threonine. The chain is Threonine synthase (thrC) from Bacillus sp. (strain ULM1).